The sequence spans 1624 residues: MPRPGTSGRRPLLLVLLLPLFAAATSAASPSPSPSQVVEVPGVPSRPASVAVCRCCPGQTSRRSRCIRAFCRVRSCQPKKCAGPQRCLNPVPAVPSPSPSVRKRQVSLNWQPLTLQEARALLKRRRPRGPGGRGLLRRRPPQRAPAGKAPVLCPLICHNGGVCVKPDRCLCPPDFAGKFCQLHSSGARPPAPAVPGLTRSVYTMPLANHRDDEHGVASMVSVHVEHPQEASVVVHQVERVSGPWEEADAEAVARAEAAARAEAAAPYTVLAQSAPREDGYSDASGFGYCFRELRGGECASPLPGLRTQEVCCRGAGLAWGVHDCQLCSERLGNSERVSAPDGPCPTGFERVNGSCEDVDECATGGRCQHGECANTRGGYTCVCPDGFLLDSSRSSCISQHVISEAKGPCFRVLRDGGCSLPILRNITKQICCCSRVGKAWGRGCQLCPPFGSEGFREICPAGPGYHYSASDLRYNTRPLGQEPPRVSLSQPRTLPATSRPSAGFLPTHRLEPRPEPRPDPRPGPELPLPSIPAWTGPEIPESGPSSGMCQRNPQVCGPGRCISRPSGYTCACDSGFRLSPQGTRCIDVDECRRVPPPCAPGRCENSPGSFRCVCGPGFRAGPRAAECLDVDECHRVPPPCDLGRCENTPGSFLCVCPAGYQAAPHGASCQDVDECTQSPGLCGRGACKNLPGSFRCVCPAGFRGSACEEDVDECAQEPPPCGPGRCDNTAGSFHCACPAGFRSRGPGAPCQDVDECARSPPPCTYGRCENTEGSFQCVCPMGFQPNTAGSECEDVDECENHLACPGQECVNSPGSFQCRTCPSGHHLHRGRCTDVDECSSGAPPCGPHGHCTNTEGSFRCSCAPGYRAPSGRPGPCADVNECLEGDFCFPHGECLNTDGSFACTCAPGYRPGPRGASCLDVDECSEEDLCQSGICTNTDGSFECICPPGHRAGPDLASCLDVDECRERGPALCGSQRCENSPGSYRCVRDCDPGYHAGPEGTCDDVDECQEYGPEICGAQRCENTPGSYRCTPACDPGYQPTPGGGCQDVDECRNRSFCGAHAVCQNLPGSFQCLCDQGYEGARDGRHCVDVNECETLQGVCGAALCENVEGSFLCVCPNSPEEFDPMTGRCVPPRTSAGTFPGSQPQAPASPVLPARPPPPPLPRRPSTPRQGPVGSGRRECYFDTAAPDACDNILARNVTWQECCCTVGEGWGSGCRIQQCPGTETAEYQSLCPHGRGYLAPSGDLSLRRDVDECQLFRDQVCKSGVCVNTAPGYSCYCSNGYYYHTQRLECIDNDECADEEPACEGGRCVNTVGSYHCTCEPPLVLDGSQRRCVSNESQSLDDNLGVCWQEVGADLVCSHPRLDRQATYTECCCLYGEAWGMDCALCPAQDSDDFEALCNVLRPPAYSPPRPGGFGLPYEYGPDLGPPYQGLPYGPELYPPPALPYDPYPPPPGPFARREAPYGAPRFDMPDFEDDGGPYGESEAPAPPGPGTRWPYRSRDTRRSFPEPEEPPEGGSYAGSLAEPYEELEAEECGILDGCTNGRCVRVPEGFTCRCFDGYRLDMTRMACVDINECDEAEAASPLCVNARCLNTDGSFRCICRPGFAPTHQPHHCAPARPRA.

Residues 1-27 (MPRPGTSGRRPLLLVLLLPLFAAATSA) form the signal peptide. The interval 125 to 146 (RRPRGPGGRGLLRRRPPQRAPA) is disordered. Residues 149–181 (APVLCPLICHNGGVCVKPDRCLCPPDFAGKFCQ) enclose the EGF-like 1 domain. Intrachain disulfides connect C153/C163, C157/C169, C171/C180, C289/C311, C298/C324, and C312/C327. Residues 287-339 (GYCFRELRGGECASPLPGLRTQEVCCRGAGLAWGVHDCQLCSERLGNSERVSA) form the TB 1 domain. A glycan (N-linked (GlcNAc...) asparagine) is linked at N352. One can recognise an EGF-like 2; calcium-binding domain in the interval 357-397 (DVDECATGGRCQHGECANTRGGYTCVCPDGFLLDSSRSSCI). Disulfide bonds link C361-C372, C367-C381, C383-C396, C409-C431, C418-C444, C432-C447, and C433-C459. One can recognise a TB 2 domain in the interval 407–459 (GPCFRVLRDGGCSLPILRNITKQICCCSRVGKAWGRGCQLCPPFGSEGFREIC). N425 carries an N-linked (GlcNAc...) asparagine glycan. A disordered region spans residues 474-546 (YNTRPLGQEP…PEIPESGPSS (73 aa)). A compositionally biased stretch (polar residues) spans 487–500 (SLSQPRTLPATSRP). Positions 508–522 (HRLEPRPEPRPDPRP) are enriched in basic and acidic residues. The region spanning 545–586 (SSGMCQRNPQVCGPGRCISRPSGYTCACDSGFRLSPQGTRCI) is the EGF-like 3 domain. Disulfide bonds link C549–C561, C556–C570, C572–C585, C591–C603, C598–C612, C614–C627, C633–C645, C640–C654, C656–C669, C675–C687, C682–C696, C698–C707, C714–C726, C721–C735, C737–C750, C756–C768, C763–C777, C779–C792, C838–C851, C845–C860, C862–C876, C882–C894, C888–C903, C905–C918, C924–C935, C930–C944, C946–C959, C1053–C1065, C1059–C1074, and C1076–C1089. The region spanning 587–628 (DVDECRRVPPPCAPGRCENSPGSFRCVCGPGFRAGPRAAECL) is the EGF-like 4; calcium-binding domain. The region spanning 629-670 (DVDECHRVPPPCDLGRCENTPGSFLCVCPAGYQAAPHGASCQ) is the EGF-like 5; calcium-binding domain. In terms of domain architecture, EGF-like 6; calcium-binding spans 671-708 (DVDECTQSPGLCGRGACKNLPGSFRCVCPAGFRGSACE). The EGF-like 7; calcium-binding domain maps to 710 to 751 (DVDECAQEPPPCGPGRCDNTAGSFHCACPAGFRSRGPGAPCQ). In terms of domain architecture, EGF-like 8; calcium-binding spans 752-793 (DVDECARSPPPCTYGRCENTEGSFQCVCPMGFQPNTAGSECE). The EGF-like 9; calcium-binding domain maps to 834–877 (DVDECSSGAPPCGPHGHCTNTEGSFRCSCAPGYRAPSGRPGPCA). The EGF-like 10; calcium-binding domain occupies 878 to 919 (DVNECLEGDFCFPHGECLNTDGSFACTCAPGYRPGPRGASCL). The EGF-like 11; calcium-binding domain occupies 920–960 (DVDECSEEDLCQSGICTNTDGSFECICPPGHRAGPDLASCL). Positions 1049–1090 (DVDECRNRSFCGAHAVCQNLPGSFQCLCDQGYEGARDGRHCV) constitute an EGF-like 12; calcium-binding domain. N-linked (GlcNAc...) asparagine glycosylation occurs at N1055. Residues 1130–1179 (GRCVPPRTSAGTFPGSQPQAPASPVLPARPPPPPLPRRPSTPRQGPVGSG) are disordered. The segment covering 1138–1149 (SAGTFPGSQPQA) has biased composition (polar residues). Pro residues predominate over residues 1156–1168 (PARPPPPPLPRRP). The 55-residue stretch at 1181–1235 (RECYFDTAAPDACDNILARNVTWQECCCTVGEGWGSGCRIQQCPGTETAEYQSLC) folds into the TB 3 domain. 10 disulfides stabilise this stretch: C1183–C1206, C1193–C1218, C1207–C1223, C1208–C1235, C1257–C1270, C1265–C1279, C1281–C1294, C1300–C1312, C1307–C1321, and C1323–C1336. N1200 carries an N-linked (GlcNAc...) asparagine glycan. Positions 1253 to 1295 (DVDECQLFRDQVCKSGVCVNTAPGYSCYCSNGYYYHTQRLECI) constitute an EGF-like 13; calcium-binding domain. Residues 1296-1337 (DNDECADEEPACEGGRCVNTVGSYHCTCEPPLVLDGSQRRCV) enclose the EGF-like 14; calcium-binding domain. Residue N1339 is glycosylated (N-linked (GlcNAc...) asparagine). The region spanning 1349-1402 (GVCWQEVGADLVCSHPRLDRQATYTECCCLYGEAWGMDCALCPAQDSDDFEALC) is the TB 4 domain. 4 cysteine pairs are disulfide-bonded: C1351/C1375, C1361/C1387, C1376/C1390, and C1377/C1402. Residues 1446–1458 (ALPYDPYPPPPGP) are compositionally biased toward pro residues. A disordered region spans residues 1446–1524 (ALPYDPYPPP…PPEGGSYAGS (79 aa)). Positions 1501–1510 (RSRDTRRSFP) are enriched in basic and acidic residues. EGF-like domains follow at residues 1533-1573 (EAEE…MACV) and 1574-1618 (DINE…HHCA). Intrachain disulfides connect C1537–C1548, C1543–C1557, C1559–C1572, C1578–C1593, C1588–C1602, and C1604–C1617.

Belongs to the LTBP family. As to quaternary structure, forms part of the large latent transforming growth factor beta precursor complex; removal is essential for activation of complex. Interacts with LTBP1 and TGFB1. Interacts with EFEMP2; this interaction promotes fibrillar deposition of EFEMP2. In terms of processing, contains hydroxylated asparagine residues. As to expression, highly expressed in heart, skeletal muscle, pancreas, uterus, and small intestine. Weakly expressed in placenta and lung.

It localises to the secreted. It is found in the extracellular space. The protein resides in the extracellular matrix. In terms of biological role, key regulator of transforming growth factor beta (TGFB1, TGFB2 and TGFB3) that controls TGF-beta activation by maintaining it in a latent state during storage in extracellular space. Associates specifically via disulfide bonds with the Latency-associated peptide (LAP), which is the regulatory chain of TGF-beta, and regulates integrin-dependent activation of TGF-beta. The sequence is that of Latent-transforming growth factor beta-binding protein 4 (LTBP4) from Homo sapiens (Human).